Here is a 128-residue protein sequence, read N- to C-terminus: Ribonuclease P protein component (128 aa).

It belongs to the RnpA family. As to quaternary structure, consists of a catalytic RNA component (M1 or rnpB) and a protein subunit.

The catalysed reaction is Endonucleolytic cleavage of RNA, removing 5'-extranucleotides from tRNA precursor.. Its function is as follows. RNaseP catalyzes the removal of the 5'-leader sequence from pre-tRNA to produce the mature 5'-terminus. It can also cleave other RNA substrates such as 4.5S RNA. The protein component plays an auxiliary but essential role in vivo by binding to the 5'-leader sequence and broadening the substrate specificity of the ribozyme. This is Ribonuclease P protein component from Mycoplasma genitalium (strain ATCC 33530 / DSM 19775 / NCTC 10195 / G37) (Mycoplasmoides genitalium).